The following is a 506-amino-acid chain: ATP synthase subunit alpha, mitochondrial (506 aa).

ATP is bound at residue 171-178 (GDRQTGKT).

It belongs to the ATPase alpha/beta chains family. In terms of assembly, F-type ATPases have 2 components, CF(1) - the catalytic core - and CF(0) - the membrane proton channel. CF(1) has five subunits: alpha(3), beta(3), gamma(1), delta(1), epsilon(1). CF(0) has three main subunits: a, b and c.

It is found in the mitochondrion. The protein localises to the mitochondrion inner membrane. Functionally, mitochondrial membrane ATP synthase (F(1)F(0) ATP synthase or Complex V) produces ATP from ADP in the presence of a proton gradient across the membrane which is generated by electron transport complexes of the respiratory chain. F-type ATPases consist of two structural domains, F(1) - containing the extramembraneous catalytic core, and F(0) - containing the membrane proton channel, linked together by a central stalk and a peripheral stalk. During catalysis, ATP synthesis in the catalytic domain of F(1) is coupled via a rotary mechanism of the central stalk subunits to proton translocation. Subunits alpha and beta form the catalytic core in F(1). Rotation of the central stalk against the surrounding alpha(3)beta(3) subunits leads to hydrolysis of ATP in three separate catalytic sites on the beta subunits. Subunit alpha does not bear the catalytic high-affinity ATP-binding sites. The chain is ATP synthase subunit alpha, mitochondrial (ATPA) from Beta vulgaris (Sugar beet).